A 114-amino-acid chain; its full sequence is Helper of Tim protein 13 (114 aa).

The CHY-type; degenerate zinc-finger motif lies at 10 to 90; the sequence is LVDKESRCEH…DSLQCPNCRS (81 aa). Zn(2+) is bound by residues Cys-17, His-19, Cys-40, Cys-43, Cys-67, Cys-70, Cys-85, and Cys-88.

Interacts with the small Tim proteins.

It is found in the mitochondrion intermembrane space. The protein resides in the mitochondrion membrane. Its function is as follows. Required for the assembly or recycling of the small Tim proteins in the mitochondrial intermembrane, thereby participating in the import and insertion of multi-pass transmembrane proteins into the mitochondrial inner membrane. This is Helper of Tim protein 13 (HOT13) from Kluyveromyces lactis (strain ATCC 8585 / CBS 2359 / DSM 70799 / NBRC 1267 / NRRL Y-1140 / WM37) (Yeast).